Here is an 82-residue protein sequence, read N- to C-terminus: ATP synthase subunit c (82 aa).

2 helical membrane passes run 7–27 and 53–73; these read FVAL…CIGI and FLLA…AMMF.

The protein belongs to the ATPase C chain family. As to quaternary structure, F-type ATPases have 2 components, F(1) - the catalytic core - and F(0) - the membrane proton channel. F(1) has five subunits: alpha(3), beta(3), gamma(1), delta(1), epsilon(1). F(0) has three main subunits: a(1), b(2) and c(10-14). The alpha and beta chains form an alternating ring which encloses part of the gamma chain. F(1) is attached to F(0) by a central stalk formed by the gamma and epsilon chains, while a peripheral stalk is formed by the delta and b chains.

Its subcellular location is the cell inner membrane. Its function is as follows. F(1)F(0) ATP synthase produces ATP from ADP in the presence of a proton or sodium gradient. F-type ATPases consist of two structural domains, F(1) containing the extramembraneous catalytic core and F(0) containing the membrane proton channel, linked together by a central stalk and a peripheral stalk. During catalysis, ATP synthesis in the catalytic domain of F(1) is coupled via a rotary mechanism of the central stalk subunits to proton translocation. Key component of the F(0) channel; it plays a direct role in translocation across the membrane. A homomeric c-ring of between 10-14 subunits forms the central stalk rotor element with the F(1) delta and epsilon subunits. This chain is ATP synthase subunit c, found in Aromatoleum aromaticum (strain DSM 19018 / LMG 30748 / EbN1) (Azoarcus sp. (strain EbN1)).